The primary structure comprises 1368 residues: DNA-directed RNA polymerase subunit beta (1368 aa).

The protein belongs to the RNA polymerase beta chain family. In terms of assembly, the RNAP catalytic core consists of 2 alpha, 1 beta, 1 beta' and 1 omega subunit. When a sigma factor is associated with the core the holoenzyme is formed, which can initiate transcription.

The catalysed reaction is RNA(n) + a ribonucleoside 5'-triphosphate = RNA(n+1) + diphosphate. In terms of biological role, DNA-dependent RNA polymerase catalyzes the transcription of DNA into RNA using the four ribonucleoside triphosphates as substrates. The polypeptide is DNA-directed RNA polymerase subunit beta (Paraburkholderia phytofirmans (strain DSM 17436 / LMG 22146 / PsJN) (Burkholderia phytofirmans)).